Consider the following 519-residue polypeptide: 2,3-bisphosphoglycerate-independent phosphoglycerate mutase (519 aa).

Positions 18 and 68 each coordinate Mn(2+). The Phosphoserine intermediate role is filled by Ser68. Residues His129, 159–160 (RD), Arg191, Arg197, 267–270 (RADR), and Lys341 each bind substrate. Residues Asp408, His412, Asp449, His450, and His468 each coordinate Mn(2+).

The protein belongs to the BPG-independent phosphoglycerate mutase family. Monomer. Mn(2+) serves as cofactor.

It catalyses the reaction (2R)-2-phosphoglycerate = (2R)-3-phosphoglycerate. It functions in the pathway carbohydrate degradation; glycolysis; pyruvate from D-glyceraldehyde 3-phosphate: step 3/5. Its function is as follows. Catalyzes the interconversion of 2-phosphoglycerate and 3-phosphoglycerate. The sequence is that of 2,3-bisphosphoglycerate-independent phosphoglycerate mutase from Coxiella burnetii (strain Dugway 5J108-111).